The sequence spans 70 residues: MLSTRKQNWGEDRVMFYDAQGRLRSLPASWTDVNEADLFSQVAAGRSFSRPDDLSALASLIDRIKRRQEE.

This is an uncharacterized protein from Sinorhizobium fredii (strain NBRC 101917 / NGR234).